Reading from the N-terminus, the 115-residue chain is NADH-ubiquinone oxidoreductase chain 3 (115 aa).

Helical transmembrane passes span 3–23 (FMLT…IAFW), 55–75 (FFLV…LLPL), and 84–104 (LEVM…SLAY).

The protein belongs to the complex I subunit 3 family. Core subunit of respiratory chain NADH dehydrogenase (Complex I) which is composed of 45 different subunits. Interacts with TMEM186. Interacts with TMEM242.

It localises to the mitochondrion inner membrane. The catalysed reaction is a ubiquinone + NADH + 5 H(+)(in) = a ubiquinol + NAD(+) + 4 H(+)(out). Functionally, core subunit of the mitochondrial membrane respiratory chain NADH dehydrogenase (Complex I) which catalyzes electron transfer from NADH through the respiratory chain, using ubiquinone as an electron acceptor. Essential for the catalytic activity of complex I. This Rhinolophus pumilus (Horseshoe bat) protein is NADH-ubiquinone oxidoreductase chain 3.